Consider the following 225-residue polypeptide: Uridylate kinase (225 aa).

An ATP-binding site is contributed by 9-10 (GS). Gly44 contacts UMP. Residues Gly45 and Arg49 each coordinate ATP. Residues Asp66 and 114–120 (THPGHTT) each bind UMP. Residues Thr140, Asn141, Tyr146, and Asp149 each coordinate ATP.

It belongs to the UMP kinase family. Homohexamer.

Its subcellular location is the cytoplasm. The enzyme catalyses UMP + ATP = UDP + ADP. It participates in pyrimidine metabolism; CTP biosynthesis via de novo pathway; UDP from UMP (UMPK route): step 1/1. With respect to regulation, inhibited by UTP. Catalyzes the reversible phosphorylation of UMP to UDP. This chain is Uridylate kinase, found in Thermococcus kodakarensis (strain ATCC BAA-918 / JCM 12380 / KOD1) (Pyrococcus kodakaraensis (strain KOD1)).